Reading from the N-terminus, the 424-residue chain is Glutamyl-tRNA reductase (424 aa).

Substrate-binding positions include 49–52, Ser105, 110–112, and Gln116; these read TCNR and EPQ. Cys50 functions as the Nucleophile in the catalytic mechanism. 185–190 is a binding site for NADP(+); that stretch reads GSGETA.

It belongs to the glutamyl-tRNA reductase family. Homodimer.

It catalyses the reaction (S)-4-amino-5-oxopentanoate + tRNA(Glu) + NADP(+) = L-glutamyl-tRNA(Glu) + NADPH + H(+). It functions in the pathway porphyrin-containing compound metabolism; protoporphyrin-IX biosynthesis; 5-aminolevulinate from L-glutamyl-tRNA(Glu): step 1/2. Functionally, catalyzes the NADPH-dependent reduction of glutamyl-tRNA(Glu) to glutamate 1-semialdehyde (GSA). The sequence is that of Glutamyl-tRNA reductase from Legionella pneumophila (strain Lens).